Reading from the N-terminus, the 166-residue chain is CDP-archaeol synthase (166 aa).

4 consecutive transmembrane segments (helical) span residues 42–62, 73–93, 104–124, and 128–148; these read FFGGVVSGVLVGLIEIWAATA, FLSVTLLATGALLGDLAKSFL, SWFLADQYDLVVGSFLLILIF, and WLFGTITLPIAVWIVVMTPLL.

Belongs to the CDP-archaeol synthase family. Mg(2+) serves as cofactor.

The protein localises to the cell membrane. The catalysed reaction is 2,3-bis-O-(geranylgeranyl)-sn-glycerol 1-phosphate + CTP + H(+) = CDP-2,3-bis-O-(geranylgeranyl)-sn-glycerol + diphosphate. It functions in the pathway membrane lipid metabolism; glycerophospholipid metabolism. Catalyzes the formation of CDP-2,3-bis-(O-geranylgeranyl)-sn-glycerol (CDP-archaeol) from 2,3-bis-(O-geranylgeranyl)-sn-glycerol 1-phosphate (DGGGP) and CTP. This reaction is the third ether-bond-formation step in the biosynthesis of archaeal membrane lipids. The polypeptide is CDP-archaeol synthase (Methanoculleus marisnigri (strain ATCC 35101 / DSM 1498 / JR1)).